The chain runs to 490 residues: Cyclin-A2-1 (490 aa).

Residues 34 to 76 (FAPSVSLPARTERKQTAKGKTKRGALDEITSASTATSAPQPKR) form a disordered region. Over residues 63–72 (TSASTATSAP) the composition is skewed to polar residues.

Belongs to the cyclin family. Cyclin AB subfamily.

This chain is Cyclin-A2-1 (CYCA2-1), found in Oryza sativa subsp. japonica (Rice).